A 558-amino-acid chain; its full sequence is Transcription factor p65 (558 aa).

Positions 25–311 (PFVEILEQPK…CIEEKRKRTR (287 aa)) constitute an RHD domain. A Phosphoserine; by PKA modification is found at Ser281. The Nuclear localization signal signature appears at 306 to 309 (KRKR). 2 disordered regions span residues 317 to 376 (FVQR…PTPE) and 388 to 544 (DDGV…PSLG). 2 stretches are compositionally biased toward pro residues: residues 342-351 (SRPPPAPQQP) and 358-376 (PPAP…PTPE). Residues 385–444 (LQFDDGVGGSGPPPSTTTTTTTTQCALGGGIPDPGGSPLDLGALLGDPPFDTIDAAELQR) form a transcriptional activation domain 1 region. Residues 418 to 433 (PGGSPLDLGALLGDPP) are compositionally biased toward low complexity. Residues 454–463 (GGIGAGGGFG) are compositionally biased toward gly residues. A transcriptional activation domain 2 region spans residues 524 to 558 (GPLHPPGAPPQPTEDSLPSLGDLDFSAFLSQFPSS). Pro residues predominate over residues 526–535 (LHPPGAPPQP). The short motif at 542-558 (SLGDLDFSAFLSQFPSS) is the 9aaTAD element.

Component of the NF-kappa-B p65-p50 complex. Component of the NF-kappa-B p65-c-Rel complex. Component of the NF-kappa-B p65-p105 complex. In terms of tissue distribution, spleen; lower level in brain.

Its subcellular location is the nucleus. It localises to the cytoplasm. NF-kappa-B is a pleiotropic transcription factor present in almost all cell types and is the endpoint of a series of signal transduction events that are initiated by a vast array of stimuli related to many biological processes such as inflammation, immunity, differentiation, cell growth, tumorigenesis and apoptosis. NF-kappa-B is a homo- or heterodimeric complex formed by the Rel-like domain-containing proteins. The dimers bind at kappa-B sites in the DNA of their target genes and the individual dimers have distinct preferences for different kappa-B sites that they can bind with distinguishable affinity and specificity. Different dimer combinations act as transcriptional activators or repressors, respectively. NF-kappa-B is controlled by various mechanisms of post-translational modification and subcellular compartmentalization as well as by interactions with other cofactors or corepressors. NF-kappa-B complexes are held in the cytoplasm in an inactive state complexed with members of the NF-kappa-B inhibitor (I-kappa-B) family. In a conventional activation pathway, I-kappa-B is phosphorylated by I-kappa-B kinases (IKKs) in response to different activators, subsequently degraded thus liberating the active NF-kappa-B complex which translocates to the nucleus. RELA shows a weak DNA-binding site which could contribute directly to DNA binding in the NF-kappa-B complex. In Gallus gallus (Chicken), this protein is Transcription factor p65 (RELA).